A 493-amino-acid polypeptide reads, in one-letter code: Ribose import ATP-binding protein RbsA (493 aa).

ABC transporter domains are found at residues 3–239 (IEMK…VGRE) and 246–493 (KRTP…TGGR). Residue 35-42 (GENGAGKS) coordinates ATP.

It belongs to the ABC transporter superfamily. Ribose importer (TC 3.A.1.2.1) family. As to quaternary structure, the complex is composed of an ATP-binding protein (RbsA), two transmembrane proteins (RbsC) and a solute-binding protein (RbsB).

The protein localises to the cell membrane. It carries out the reaction D-ribose(out) + ATP + H2O = D-ribose(in) + ADP + phosphate + H(+). In terms of biological role, part of the ABC transporter complex RbsABC involved in ribose import. Responsible for energy coupling to the transport system. The protein is Ribose import ATP-binding protein RbsA of Bacillus subtilis (strain 168).